A 248-amino-acid polypeptide reads, in one-letter code: MDQRQRRILGQPLSIPTSQPKQKRTSLISFFSKVSWKLRFQKREPLKNVLFILAERARDPNANKRHTAMRGLGTMAREAPDKVRKHKKIVLDLLVYGLYDPVSLEVIHESMKTLTVVLGKIQGKGLGSFFIDITLQTRTLLDDENDSLRYSAFVLFGQLAAFAGRKWKKFFTGQVKQTRDSLLIHLQDRNPQVAKACKTTFRACSPYLKLRKEYSFQSEEDQRNIKLYRQLSHYHPEILQFFYANKIL.

A disordered region spans residues methionine 1–proline 20. 2 HEAT repeats span residues glutamate 44–alanine 79 and serine 128–alanine 163.

It is found in the nucleus. It localises to the nucleolus. The polypeptide is Protein maestro (MRO) (Macaca fascicularis (Crab-eating macaque)).